We begin with the raw amino-acid sequence, 766 residues long: Leucine-rich repeat and fibronectin type III domain-containing protein 1 (766 aa).

Residues M1–G31 form the signal peptide. Positions Q32–R65 constitute an LRRNT domain. Residues Q32–M536 are Extracellular-facing. LRR repeat units follow at residues R66 to N87, S90 to D111, A114 to G135, N138 to A159, T163 to Q184, N187 to Q208, and K211 to L232. Residue N87 is glycosylated (N-linked (GlcNAc...) asparagine). One can recognise an LRRCT domain in the interval N252–P298. Residues P299 to C386 form the Ig-like domain. A disulfide bridge connects residues C321 and C370. N343 carries an N-linked (GlcNAc...) asparagine glycan. Residues P397–S422 form a disordered region. Residues T424 to D520 enclose the Fibronectin type-III domain. Residues I537–I557 form a helical membrane-spanning segment. At R558–V766 the chain is on the cytoplasmic side. 2 disordered regions span residues R568–P601 and C646–G742. The residue at position 713 (S713) is a Phosphoserine. The span at Y714–T727 shows a compositional bias: basic residues.

The protein belongs to the LRFN family. As to quaternary structure, forms heteromeric complexes with LRFN2, LRFN4 and LRFN5; binding to LRFN2 and LRFN5 may be weaker than that to LRFN4. Also interacts with LRFN3. Forms homomeric complexes, but not across cell junctions. Interacts with DLG1, DLG2 and DLG4, but not with MAGI2, not CASK. Interacts with DLG3. Interacts with 2 AMPA receptor subunits GRIA1 and GRIA2 and NMDA receptor subunit GRIN1. Post-translationally, glycosylated. As to expression, mainly expressed in brain (at protein level) and testis. In brain, found in cerebral cortex (including pyramidal neurons), hippocampus (including CA3 and CA1 neurons), dentate gyrus, cerebellum (including Purkinje neurons) (at protein level) (at protein level). Also expressed in the olfactory bulb.

It is found in the membrane. It localises to the synapse. The protein resides in the postsynaptic density membrane. Promotes neurite outgrowth in hippocampal neurons. Involved in the regulation of the differentiation and maintenance of excitatory synapses. Induces the clustering of excitatory postsynaptic proteins, including DLG4, DLGAP1, GRIA1 and GRIN1. The polypeptide is Leucine-rich repeat and fibronectin type III domain-containing protein 1 (Lrfn1) (Rattus norvegicus (Rat)).